The chain runs to 415 residues: Adenylosuccinate synthetase (415 aa).

Residues Gly-12–Lys-18 and Gly-40–Thr-42 contribute to the GTP site. The Proton acceptor role is filled by Asp-13. Asp-13 and Gly-40 together coordinate Mg(2+). Residues Asp-13–Lys-16, Asn-38–His-41, Thr-125, Arg-139, Gln-219, Thr-234, and Arg-298 each bind IMP. His-41 serves as the catalytic Proton donor. Thr-294 to Arg-300 contributes to the substrate binding site. Residues Arg-300, Lys-326 to Asp-328, and Ser-404 to Gly-406 each bind GTP.

It belongs to the adenylosuccinate synthetase family. Homodimer. The cofactor is Mg(2+).

It localises to the cytoplasm. The catalysed reaction is IMP + L-aspartate + GTP = N(6)-(1,2-dicarboxyethyl)-AMP + GDP + phosphate + 2 H(+). It functions in the pathway purine metabolism; AMP biosynthesis via de novo pathway; AMP from IMP: step 1/2. Plays an important role in the de novo pathway of purine nucleotide biosynthesis. Catalyzes the first committed step in the biosynthesis of AMP from IMP. The protein is Adenylosuccinate synthetase of Wolinella succinogenes (strain ATCC 29543 / DSM 1740 / CCUG 13145 / JCM 31913 / LMG 7466 / NCTC 11488 / FDC 602W) (Vibrio succinogenes).